Reading from the N-terminus, the 583-residue chain is Propane 2-monooxygenase operon transcriptional activator MimR (583 aa).

The Sigma-54 factor interaction domain occupies 320–513 (LAGRSSSFRR…LRHVLTETLR (194 aa)). ATP contacts are provided by residues 348 to 355 (GEKGSGRT) and 395 to 404 (DADFAVIVAD).

Acts as a transcriptional activator of the mimABCD operon encoding the propane 2-monooxygenase complex. This chain is Propane 2-monooxygenase operon transcriptional activator MimR, found in Mycolicibacterium goodii (Mycobacterium goodii).